A 242-amino-acid polypeptide reads, in one-letter code: MAGENSSTETKNQEINEKTPEVQTFETNVEFESSQKVESDTELSADNASIDTDIQSTESTSKEKDQVLLKEAYELLQTQLETTKYQLEEKESQYKRLGADFDNFRKRTQKEKEDLDTQVKCSTIMELLPVIDNFERARSHIKPANDGEMAIHKSYQSVYKQMVDSLKRLGVSVMRPEGQEFDPNLHEAVMREATAEHPEGTVIEELVRGYILGERVLRHAMVKVATAPDTDAETENQTDPES.

The segment covering 1-10 (MAGENSSTET) has biased composition (polar residues). The interval 1–64 (MAGENSSTET…QSTESTSKEK (64 aa)) is disordered. The span at 11–20 (KNQEINEKTP) shows a compositional bias: basic and acidic residues. Composition is skewed to polar residues over residues 21-32 (EVQTFETNVEFE) and 40-59 (DTEL…STES).

It belongs to the GrpE family. As to quaternary structure, homodimer.

The protein resides in the cytoplasm. Functionally, participates actively in the response to hyperosmotic and heat shock by preventing the aggregation of stress-denatured proteins, in association with DnaK and GrpE. It is the nucleotide exchange factor for DnaK and may function as a thermosensor. Unfolded proteins bind initially to DnaJ; upon interaction with the DnaJ-bound protein, DnaK hydrolyzes its bound ATP, resulting in the formation of a stable complex. GrpE releases ADP from DnaK; ATP binding to DnaK triggers the release of the substrate protein, thus completing the reaction cycle. Several rounds of ATP-dependent interactions between DnaJ, DnaK and GrpE are required for fully efficient folding. The chain is Protein GrpE from Trichodesmium erythraeum (strain IMS101).